Reading from the N-terminus, the 195-residue chain is 3-isopropylmalate dehydratase small subunit (195 aa).

This sequence belongs to the LeuD family. LeuD type 1 subfamily. In terms of assembly, heterodimer of LeuC and LeuD.

It carries out the reaction (2R,3S)-3-isopropylmalate = (2S)-2-isopropylmalate. It participates in amino-acid biosynthesis; L-leucine biosynthesis; L-leucine from 3-methyl-2-oxobutanoate: step 2/4. In terms of biological role, catalyzes the isomerization between 2-isopropylmalate and 3-isopropylmalate, via the formation of 2-isopropylmaleate. The sequence is that of 3-isopropylmalate dehydratase small subunit from Rubrobacter xylanophilus (strain DSM 9941 / JCM 11954 / NBRC 16129 / PRD-1).